Here is a 154-residue protein sequence, read N- to C-terminus: uncharacterized protein (154 aa).

The next 4 helical transmembrane spans lie at 39-61 (LLIF…FFAR), 65-87 (LPYI…VSLL), 94-113 (VESL…RVFI), and 128-150 (LLIN…SPFT).

The protein resides in the cell membrane. This is an uncharacterized protein from Aquifex aeolicus (strain VF5).